The sequence spans 185 residues: Pycsar effector protein EcPycTM (185 aa).

The next 3 membrane-spanning stretches (helical) occupy residues 32 to 52 (ALLLAVNGATATILSNKVGYF), 63 to 83 (MVIFFLLLFMISIFIFMSVLL), and 141 to 161 (FILSCIAKQKFLFFSSAVSWI).

It localises to the cell inner membrane. In terms of biological role, pycsar (pyrimidine cyclase system for antiphage resistance) provides immunity against bacteriophage. The pyrimidine cyclase (PycC) synthesizes cyclic nucleotides in response to infection; these serve as specific second messenger signals. The signals activate the adjacent effector, leading to bacterial cell death and abortive phage infection. A clade E Pycsar system. The effector component of a two-gene Pycsar system. Expression of this and adjacent cytidylate cyclase EcPycC (AC P0DV24) confers resistance to bacteriophage P1 and T5; this protein is required for resistance. When cells expressing the Pycsar system are infected by phage T5 at low multiplicity of infection (0.2 MOI) the culture survives, at 2.0 MOI bacteria enter growth arrest. The same cells enter growth arrest after exposure to 250 uM cCMP but not cUMP; this effector protein responds only to cCMP, usually produced by its cognate NTP cyclase. Some of the cells treated with cCMP have abnormal membrane protrusions, probably due to effects on membrane integrity. The polypeptide is Pycsar effector protein EcPycTM (Escherichia coli).